A 258-amino-acid polypeptide reads, in one-letter code: Sec-independent protein translocase protein TatC (258 aa).

Over 2 to 23 (SVEDTQPLITHLIELRKRLLNC) the chain is Cytoplasmic. Residues 24-44 (IISVIVIFLCLVYFANDIYHL) traverse the membrane as a helical segment. The Periplasmic portion of the chain corresponds to 45–75 (VSAPLIKQLPQGSTMIATDVASPFFTPIKLT). A helical transmembrane segment spans residues 76–96 (FMVSLILSAPVILYQVWAFIA). Residues 97–115 (PALYKHERRLVVPLLVSSS) lie on the Cytoplasmic side of the membrane. The helical transmembrane segment at 116–136 (LLFYIGMAFAYFVVFPLAFGF) threads the bilayer. The Periplasmic segment spans residues 137 to 156 (LANTAPEGVQVSTDIASYLS). Residues 157-177 (FVMALFMAFGVSFEVPVAIVL) traverse the membrane as a helical segment. Residues 178 to 192 (LCWMGITSPEDLRKK) lie on the Cytoplasmic side of the membrane. Residues 193-210 (RPYVLVGAFVVGMLLTPP) form a helical membrane-spanning segment. Residue Asp-211 is a topological domain, periplasmic. The helical transmembrane segment at 212–232 (VFSQTLLAIPMYCLFEIGVFF) threads the bilayer. Residues 233-258 (SRFYVGKGRNREEENDAEAESEKTEE) are Cytoplasmic-facing.

This sequence belongs to the TatC family. The Tat system comprises two distinct complexes: a TatABC complex, containing multiple copies of TatA, TatB and TatC subunits, and a separate TatA complex, containing only TatA subunits. Substrates initially bind to the TatABC complex, which probably triggers association of the separate TatA complex to form the active translocon.

It localises to the cell inner membrane. Functionally, part of the twin-arginine translocation (Tat) system that transports large folded proteins containing a characteristic twin-arginine motif in their signal peptide across membranes. Together with TatB, TatC is part of a receptor directly interacting with Tat signal peptides. The chain is Sec-independent protein translocase protein TatC from Escherichia coli O6:H1 (strain CFT073 / ATCC 700928 / UPEC).